The sequence spans 504 residues: D-alanine--D-alanyl carrier protein ligase (504 aa).

T152–S153 serves as a coordination point for ATP. Residue D197 coordinates D-alanine. N292 to T297 provides a ligand contact to ATP. Residue V301 participates in D-alanine binding. ATP is bound by residues D383, Y394 to R397, and K492. A D-alanine-binding site is contributed by K492.

The protein belongs to the ATP-dependent AMP-binding enzyme family. DltA subfamily.

The protein resides in the cytoplasm. The enzyme catalyses holo-[D-alanyl-carrier protein] + D-alanine + ATP = D-alanyl-[D-alanyl-carrier protein] + AMP + diphosphate. The protein operates within cell wall biogenesis; lipoteichoic acid biosynthesis. Catalyzes the first step in the D-alanylation of lipoteichoic acid (LTA), the activation of D-alanine and its transfer onto the D-alanyl carrier protein (Dcp) DltC. In an ATP-dependent two-step reaction, forms a high energy D-alanyl-AMP intermediate, followed by transfer of the D-alanyl residue as a thiol ester to the phosphopantheinyl prosthetic group of the Dcp. D-alanylation of LTA plays an important role in modulating the properties of the cell wall in Gram-positive bacteria, influencing the net charge of the cell wall. This chain is D-alanine--D-alanyl carrier protein ligase, found in Bacillus cereus (strain AH187).